Reading from the N-terminus, the 352-residue chain is GPLRVRTSKMALPAALLRAAALRCRLPLASVGRRHLAAEAFVRDRPHVNVGTIGHVDHGKTTLTAAITKVLSESGGARFQRYEDIDKAPEERARGITINAAHVEYSTARRHYAHTDCPGHADYVKNMITGTAPLDGCILVVAATDGQMPQTREHLLLARQVGVRHVVVYVNKADAVSDAELLPLVELELRELLAEMGYDAERTPVVVGSALCALQDRDPTLGRDSVLQLLEAIDTHIPLPHRDVQRPFLLPIEGVHSIPGRGTVVTGTVERGAVSKGDECELRGYGRVLKAVVTGLETFHKSLPRAEAGDNVGALLRGLRREDVRRGMVMGQPGALRDHRKLQAQVYVLSAQ.

The tr-type G domain maps to 45 to 241 (RPHVNVGTIG…AIDTHIPLPH (197 aa)). Residues 54–61 (GHVDHGKT) are G1. Positions 57, 59, 60, 61, and 62 each coordinate GTP. Residue threonine 61 participates in Mg(2+) binding. The interval 95-99 (GITIN) is G2. A G3 region spans residues 116–119 (DCPG). Residues asparagine 171, aspartate 174, serine 209, alanine 210, and leucine 211 each contribute to the GTP site. The tract at residues 171-174 (NKAD) is G4. The segment at 209 to 211 (SAL) is G5.

Its subcellular location is the mitochondrion. The enzyme catalyses GTP + H2O = GDP + phosphate + H(+). GTP hydrolase that promotes the GTP-dependent binding of aminoacyl-tRNA to the A-site of ribosomes during protein biosynthesis. The polypeptide is Elongation factor Tu, mitochondrial (Gallus gallus (Chicken)).